The following is an 86-amino-acid chain: Small ribosomal subunit protein bS18 (86 aa).

The protein belongs to the bacterial ribosomal protein bS18 family. Part of the 30S ribosomal subunit. Forms a tight heterodimer with protein bS6.

Binds as a heterodimer with protein bS6 to the central domain of the 16S rRNA, where it helps stabilize the platform of the 30S subunit. This Campylobacter concisus (strain 13826) protein is Small ribosomal subunit protein bS18.